The primary structure comprises 305 residues: Probable aspartoacylase (305 aa).

The Zn(2+) site is built by histidine 13 and glutamate 16. Substrate is bound by residues arginine 55 and 62–63 (NR). Zn(2+) is bound at residue histidine 105. Substrate contacts are provided by glutamate 163 and tyrosine 273.

The protein belongs to the AspA/AstE family. Aspartoacylase subfamily. It depends on Zn(2+) as a cofactor.

It catalyses the reaction an N-acyl-L-aspartate + H2O = a carboxylate + L-aspartate. The protein is Probable aspartoacylase of Prochlorococcus marinus (strain NATL2A).